The sequence spans 397 residues: MGWKTLDDMDLAGKVVLVRVDVNVPMENGEVTDATRIEKIVPTVEDILKKGGKPVLLAHFGRPKGKVVDEMSLRLVLPALQKALPGTKVSFAADCVGPEPEQAVAAMLEGEVLLLENTRFHAGEEKNDPELAAAMAKLGQVYVNDAFSAAHRAHASTEGLARLLPSAAGRLMEAELKALEAALGHPERPVVAVVGGAKVSTKLDLLGNLVGRVDHLVIGGGMANTFLVAQGIEVGKSLAERDMADTAREILSKAKAAGCTIHLPLDVVVAREFKAGAANETVETSACPADAMILDAGPKTVAALSEVFASAKTLIWNGPLGAFEIEPFDAATNAAALQVAQLTKAGQLISVAGGGDTVAALNKAGAAEGFSYISTAGGAFLEWMEGKELPGVAALTV.

Residues aspartate 21–asparagine 23, arginine 36, histidine 59–arginine 62, arginine 119, and arginine 152 contribute to the substrate site. ATP-binding positions include lysine 202, glutamate 324, and glycine 354–threonine 357.

Belongs to the phosphoglycerate kinase family. Monomer.

The protein resides in the cytoplasm. The catalysed reaction is (2R)-3-phosphoglycerate + ATP = (2R)-3-phospho-glyceroyl phosphate + ADP. It functions in the pathway carbohydrate degradation; glycolysis; pyruvate from D-glyceraldehyde 3-phosphate: step 2/5. The protein is Phosphoglycerate kinase of Cereibacter sphaeroides (strain ATCC 17029 / ATH 2.4.9) (Rhodobacter sphaeroides).